Here is a 217-residue protein sequence, read N- to C-terminus: Pyrrolidone-carboxylate peptidase (217 aa).

Residues glutamate 78, cysteine 141, and histidine 168 contribute to the active site.

It belongs to the peptidase C15 family. Homotetramer.

The protein localises to the cytoplasm. It catalyses the reaction Release of an N-terminal pyroglutamyl group from a polypeptide, the second amino acid generally not being Pro.. Functionally, removes 5-oxoproline from various penultimate amino acid residues except L-proline. The sequence is that of Pyrrolidone-carboxylate peptidase from Treponema denticola (strain ATCC 35405 / DSM 14222 / CIP 103919 / JCM 8153 / KCTC 15104).